A 651-amino-acid chain; its full sequence is MSEKLYPVLAEAKRNTLIDNATYLEWYQESVSDPDSFWAKHGRRIDWFKPFTKVKNTDFNGDVSIKWYEDGVTNVSYNCIDRHLKSRGDQVAIIWEGDNPYIDKKITYRELHENVCRLANVLKKHGVKKGDRVTIYLPMIPEAAYAMLACARIGAVHSVVFAGFSPEALAGRIVDCESTFVITADEGVRGGKPVPLKENTDTAIDIAAKQYVMVNKVLTVRRTGGKVSWGPGRDLWYHQEVASVEPTCDPEPMNAEDPLFILYTSGSTGKPKGVLHTTGGYLVYASMTHQYVFDYHDGDIYWCTADVGWVTGHSYIVYGPLANGATTLMFEGVPNFPDQGRFWEVVDKHHVNIFYTAPTAIRALMGAGDEFVTRSSRSTLRLLGSVGEPINPEAWEWYYNVVGDQRSPIVDTWWQTETGGILITPLPGATDLKPGSATRPFFGIKPELVDNEGAVIEGAVDGNLCIIDSWPGQMRTLYGDHKRFIEAYFSTYKGKYFTGDGCRRDEDGYYWITGRVDDVLNISGHRLGTAEIESALVSHHSVSEAAVVGYPHPIKGQGIYCYVTLMTGEAVQDEDALRKELTQHVRKEIGPIATPDKIQFSPGLPKTRSGKIMRRILRKIAEDEFGALGDTSTLADPGVVDDLIENRQNKK.

CoA contacts are provided by residues 189–192 (RGGK), Thr311, and Asn335. Residues 387 to 389 (GEP), 411 to 416 (DTWWQT), Asp500, and Arg515 each bind ATP. Ser523 is a CoA binding site. Arg526 is a binding site for ATP. Residues Val537, His539, and Val542 each contribute to the Mg(2+) site. Arg586 is a binding site for CoA. At Lys611 the chain carries N6-acetyllysine.

This sequence belongs to the ATP-dependent AMP-binding enzyme family. It depends on Mg(2+) as a cofactor. Post-translationally, acetylated. Deacetylation by the SIR2-homolog deacetylase activates the enzyme.

It carries out the reaction acetate + ATP + CoA = acetyl-CoA + AMP + diphosphate. Its function is as follows. Catalyzes the conversion of acetate into acetyl-CoA (AcCoA), an essential intermediate at the junction of anabolic and catabolic pathways. AcsA undergoes a two-step reaction. In the first half reaction, AcsA combines acetate with ATP to form acetyl-adenylate (AcAMP) intermediate. In the second half reaction, it can then transfer the acetyl group from AcAMP to the sulfhydryl group of CoA, forming the product AcCoA. This chain is Acetyl-coenzyme A synthetase, found in Brucella anthropi (strain ATCC 49188 / DSM 6882 / CCUG 24695 / JCM 21032 / LMG 3331 / NBRC 15819 / NCTC 12168 / Alc 37) (Ochrobactrum anthropi).